Consider the following 327-residue polypeptide: GMP reductase (327 aa).

The active-site Thioimidate intermediate is the Cys-175. Residue 204–227 (IIADGGIRTHGDVAKSIRFGATMV) participates in NADP(+) binding.

This sequence belongs to the IMPDH/GMPR family. GuaC type 2 subfamily.

The catalysed reaction is IMP + NH4(+) + NADP(+) = GMP + NADPH + 2 H(+). Its function is as follows. Catalyzes the irreversible NADPH-dependent deamination of GMP to IMP. It functions in the conversion of nucleobase, nucleoside and nucleotide derivatives of G to A nucleotides, and in maintaining the intracellular balance of A and G nucleotides. This is GMP reductase from Bacillus thuringiensis subsp. konkukian (strain 97-27).